Reading from the N-terminus, the 341-residue chain is Paired box protein Pax-9 (341 aa).

A DNA-binding region (paired) is located at residues 4–130 (AFGEVNQLGG…SSISRILRNK (127 aa)). Residues 7 to 63 (EVNQLGGVFVNGRPLPNAIRLRIVELAQLGIRPCDISRQLRVSHGCVSKILARYNET) form a PAI subdomain region. Residues 82–130 (TVVKHIRTYKQRDPGIFAWEIRDRLLADGVCDKYNVPSVSSISRILRNK) are RED subdomain. The segment at 168–189 (AAAAKVPTPPGVPAIPGSVAMP) is interaction with KDM5B.

As to quaternary structure, interacts with KDM5B.

The protein localises to the nucleus. In terms of biological role, transcription factor required for normal development of thymus, parathyroid glands, ultimobranchial bodies, teeth, skeletal elements of skull and larynx as well as distal limbs. The protein is Paired box protein Pax-9 (PAX9) of Saguinus oedipus (Cotton-top tamarin).